We begin with the raw amino-acid sequence, 261 residues long: Cytochrome c oxidase subunit 3 (261 aa).

Over M1–P15 the chain is Mitochondrial matrix. A helical transmembrane segment spans residues W16–W34. The Mitochondrial intermembrane segment spans residues F35–T40. Residues T41 to T66 traverse the membrane as a helical segment. The Mitochondrial matrix portion of the chain corresponds to F67 to T72. A helical membrane pass occupies residues P73–S105. At L106 to E128 the chain is on the mitochondrial intermembrane side. The chain crosses the membrane as a helical span at residues V129 to M152. Residues E153–N155 are Mitochondrial matrix-facing. A helical membrane pass occupies residues R156 to E183. The Mitochondrial intermembrane segment spans residues A184 to D190. A helical transmembrane segment spans residues G191–L223. Topologically, residues K224–H232 are mitochondrial matrix. Residues F233–I256 form a helical membrane-spanning segment. Over Y257–S261 the chain is Mitochondrial intermembrane.

It belongs to the cytochrome c oxidase subunit 3 family. As to quaternary structure, component of the cytochrome c oxidase (complex IV, CIV), a multisubunit enzyme composed of 14 subunits. The complex is composed of a catalytic core of 3 subunits MT-CO1, MT-CO2 and MT-CO3, encoded in the mitochondrial DNA, and 11 supernumerary subunits COX4I, COX5A, COX5B, COX6A, COX6B, COX6C, COX7A, COX7B, COX7C, COX8 and NDUFA4, which are encoded in the nuclear genome. The complex exists as a monomer or a dimer and forms supercomplexes (SCs) in the inner mitochondrial membrane with NADH-ubiquinone oxidoreductase (complex I, CI) and ubiquinol-cytochrome c oxidoreductase (cytochrome b-c1 complex, complex III, CIII), resulting in different assemblies (supercomplex SCI(1)III(2)IV(1) and megacomplex MCI(2)III(2)IV(2)).

Its subcellular location is the mitochondrion inner membrane. The catalysed reaction is 4 Fe(II)-[cytochrome c] + O2 + 8 H(+)(in) = 4 Fe(III)-[cytochrome c] + 2 H2O + 4 H(+)(out). Functionally, component of the cytochrome c oxidase, the last enzyme in the mitochondrial electron transport chain which drives oxidative phosphorylation. The respiratory chain contains 3 multisubunit complexes succinate dehydrogenase (complex II, CII), ubiquinol-cytochrome c oxidoreductase (cytochrome b-c1 complex, complex III, CIII) and cytochrome c oxidase (complex IV, CIV), that cooperate to transfer electrons derived from NADH and succinate to molecular oxygen, creating an electrochemical gradient over the inner membrane that drives transmembrane transport and the ATP synthase. Cytochrome c oxidase is the component of the respiratory chain that catalyzes the reduction of oxygen to water. Electrons originating from reduced cytochrome c in the intermembrane space (IMS) are transferred via the dinuclear copper A center (CU(A)) of subunit 2 and heme A of subunit 1 to the active site in subunit 1, a binuclear center (BNC) formed by heme A3 and copper B (CU(B)). The BNC reduces molecular oxygen to 2 water molecules using 4 electrons from cytochrome c in the IMS and 4 protons from the mitochondrial matrix. The protein is Cytochrome c oxidase subunit 3 (MT-CO3) of Gazella leptoceros (Sand gazelle).